The chain runs to 263 residues: Probable septum site-determining protein MinC (263 aa).

The tract at residues 107 to 159 is disordered; it reads LPPSGARERPLDIKDSAPRKPAEEPSPSAGEARPEPAKAEEKPAEPVSRPTKV. 2 stretches are compositionally biased toward basic and acidic residues: residues 112 to 129 and 138 to 150; these read ARER…KPAE and ARPE…EKPA.

Belongs to the MinC family. Interacts with MinD and FtsZ.

Cell division inhibitor that blocks the formation of polar Z ring septums. Rapidly oscillates between the poles of the cell to destabilize FtsZ filaments that have formed before they mature into polar Z rings. Prevents FtsZ polymerization. This chain is Probable septum site-determining protein MinC, found in Pseudomonas aeruginosa (strain LESB58).